A 242-amino-acid chain; its full sequence is 1-(5-phosphoribosyl)-5-[(5-phosphoribosylamino)methylideneamino] imidazole-4-carboxamide isomerase (242 aa).

The active-site Proton acceptor is the Asp8. Asp130 functions as the Proton donor in the catalytic mechanism.

It belongs to the HisA/HisF family.

The protein localises to the cytoplasm. The catalysed reaction is 1-(5-phospho-beta-D-ribosyl)-5-[(5-phospho-beta-D-ribosylamino)methylideneamino]imidazole-4-carboxamide = 5-[(5-phospho-1-deoxy-D-ribulos-1-ylimino)methylamino]-1-(5-phospho-beta-D-ribosyl)imidazole-4-carboxamide. It functions in the pathway amino-acid biosynthesis; L-histidine biosynthesis; L-histidine from 5-phospho-alpha-D-ribose 1-diphosphate: step 4/9. The chain is 1-(5-phosphoribosyl)-5-[(5-phosphoribosylamino)methylideneamino] imidazole-4-carboxamide isomerase from Acidithiobacillus ferrooxidans (strain ATCC 53993 / BNL-5-31) (Leptospirillum ferrooxidans (ATCC 53993)).